Here is a 386-residue protein sequence, read N- to C-terminus: 8-amino-7-oxononanoate synthase (386 aa).

Arg-20 serves as a coordination point for substrate. Position 107-108 (107-108) interacts with pyridoxal 5'-phosphate; that stretch reads GY. His-132 is a binding site for substrate. 3 residues coordinate pyridoxal 5'-phosphate: Ser-178, His-206, and Thr-234. At Lys-237 the chain carries N6-(pyridoxal phosphate)lysine. Position 351 (Thr-351) interacts with substrate.

It belongs to the class-II pyridoxal-phosphate-dependent aminotransferase family. BioF subfamily. As to quaternary structure, homodimer. It depends on pyridoxal 5'-phosphate as a cofactor.

It catalyses the reaction 6-carboxyhexanoyl-[ACP] + L-alanine + H(+) = (8S)-8-amino-7-oxononanoate + holo-[ACP] + CO2. It functions in the pathway cofactor biosynthesis; biotin biosynthesis. Its function is as follows. Catalyzes the decarboxylative condensation of pimeloyl-[acyl-carrier protein] and L-alanine to produce 8-amino-7-oxononanoate (AON), [acyl-carrier protein], and carbon dioxide. This chain is 8-amino-7-oxononanoate synthase, found in Aromatoleum aromaticum (strain DSM 19018 / LMG 30748 / EbN1) (Azoarcus sp. (strain EbN1)).